A 520-amino-acid polypeptide reads, in one-letter code: ADP,ATP carrier protein 4 (520 aa).

The next 12 membrane-spanning stretches (helical) occupy residues 43–63 (LSKF…QNLI), 80–100 (ISFL…AIYV), 111–131 (IFYL…YVIF), 166–186 (FSLF…LLFW), 201–221 (FYPL…QFLE), 240–260 (FHTL…IVGI), 305–325 (LIAT…GPWK), 339–359 (AAFI…FVVL), 370–390 (FTAA…FFAV), 399–419 (LIVA…IGAI), 462–482 (LGKS…PSAS), and 485–505 (SISV…FWAV).

The protein belongs to the ADP/ATP translocase tlc family.

The protein resides in the cell membrane. Functionally, provides the rickettsial cell with host ATP in exchange for rickettsial ADP. This is an obligate exchange system. This energy acquiring activity is an important component of rickettsial parasitism. The protein is ADP,ATP carrier protein 4 (tlcD) of Rickettsia bellii (strain RML369-C).